The following is a 140-amino-acid chain: ATP synthase epsilon chain (140 aa).

This sequence belongs to the ATPase epsilon chain family. In terms of assembly, F-type ATPases have 2 components, CF(1) - the catalytic core - and CF(0) - the membrane proton channel. CF(1) has five subunits: alpha(3), beta(3), gamma(1), delta(1), epsilon(1). CF(0) has three main subunits: a, b and c.

The protein localises to the cell inner membrane. Its function is as follows. Produces ATP from ADP in the presence of a proton gradient across the membrane. In Herminiimonas arsenicoxydans, this protein is ATP synthase epsilon chain.